Consider the following 225-residue polypeptide: GTP-binding nuclear protein Ran (225 aa).

The 165-residue stretch at 8 to 172 (VVAEFKLVLV…LWILRKLTGD (165 aa)) folds into the Small GTPase Ran-type domain. 19 to 26 (DGGVGKTT) is a binding site for GTP. A switch-I region spans residues 38–46 (KRYIATQGV). GTP contacts are provided by residues Gly-69, 123–126 (NKVD), and 151–153 (SAK). The segment at 69 to 85 (GQEKLGGLREGYYIGAN) is switch-II.

Belongs to the small GTPase superfamily. Ran family. In terms of assembly, monomer. Found in a nuclear export complex with RanGTP, exportin and pre-miRNA.

It is found in the nucleus. Its function is as follows. GTP-binding protein involved in nucleocytoplasmic transport. Required for the import of protein into the nucleus and also for RNA export. Involved in chromatin condensation and control of cell cycle. This is GTP-binding nuclear protein Ran from Tetrahymena thermophila.